The following is a 999-amino-acid chain: Hypoxia up-regulated protein 1 (999 aa).

An N-terminal signal peptide occupies residues 1-32 (MAATVRRQRPRRLLCWTLVAVLLADLLALSDT). Residues Asn155, Asn222, and Asn515 are each glycosylated (N-linked (GlcNAc...) asparagine). The disordered stretch occupies residues 564–694 (VEDSPEEEST…KKQKPARKQK (131 aa)). Phosphoserine is present on Ser567. Residues 574-583 (LTKLGNTISS) show a composition bias toward polar residues. N-linked (GlcNAc...) asparagine glycosylation is present at Asn596. Composition is skewed to basic and acidic residues over residues 611-626 (GSKDEPGEQGDLKEET) and 641-670 (PKGDAAPEGEKPDEKESGGKSEAQKPEEKG). Asn830, Asn862, and Asn869 each carry an N-linked (GlcNAc...) asparagine glycan. The residue at position 883 (Lys883) is an N6-acetyllysine. The disordered stretch occupies residues 909 to 999 (AKFTKPRPRP…QKRSSKNDEL (91 aa)). 2 N-linked (GlcNAc...) asparagine glycosylation sites follow: Asn922 and Asn931. A compositionally biased stretch (basic and acidic residues) spans 949 to 962 (EEAKPILEPDKEET). The Prevents secretion from ER motif lies at 996 to 999 (NDEL).

It belongs to the heat shock protein 70 family. Part of a large chaperone multiprotein complex comprising DNAJB11, HSP90B1, HSPA5, HYOU, PDIA2, PDIA4, PDIA6, PPIB, SDF2L1, UGGT1 and very small amounts of ERP29, but not, or at very low levels, CALR nor CANX.

The protein resides in the endoplasmic reticulum lumen. Has a pivotal role in cytoprotective cellular mechanisms triggered by oxygen deprivation. Promotes HSPA5/BiP-mediated ATP nucleotide exchange and thereby activates the unfolded protein response (UPR) pathway in the presence of endoplasmic reticulum stress. May play a role as a molecular chaperone and participate in protein folding. This is Hypoxia up-regulated protein 1 (HYOU1) from Cricetulus griseus (Chinese hamster).